The chain runs to 150 residues: Protein A151R (150 aa).

It belongs to the asfivirus A151R family. In terms of assembly, monomer. Homodimer. Interacts with protein B119L. Interacts with membrane protein E248R. Zn(2+) is required as a cofactor.

Its function is as follows. May participate in a redox cascade for the formation of disulfide bonds in viral proteins. The chain is Protein A151R from African swine fever virus (isolate Tick/Malawi/Lil 20-1/1983) (ASFV).